Reading from the N-terminus, the 177-residue chain is Large ribosomal subunit protein uL6 (177 aa).

It belongs to the universal ribosomal protein uL6 family. Part of the 50S ribosomal subunit.

In terms of biological role, this protein binds to the 23S rRNA, and is important in its secondary structure. It is located near the subunit interface in the base of the L7/L12 stalk, and near the tRNA binding site of the peptidyltransferase center. The polypeptide is Large ribosomal subunit protein uL6 (Pseudoalteromonas atlantica (strain T6c / ATCC BAA-1087)).